A 152-amino-acid polypeptide reads, in one-letter code: MTITDLLLILFIAALLAYALYDQFIMPRRNGPTLLSIALLRRGRVDSVIFVGLVAILIYNNVTSHGAQMTTWLLSALALMGFYIFWIRTPRIIFKQRGFFFANVWIEYNRIKEMNLSEDGVLVMQLEQRRLLIRVRNIDDLEKIYKLLIENQ.

Transmembrane regions (helical) follow at residues 6-26, 45-65, and 67-87; these read LLLI…QFIM, VDSV…VTSH, and AQMT…IFWI.

It belongs to the UPF0266 family.

It is found in the cell inner membrane. The chain is UPF0266 membrane protein YobD from Salmonella paratyphi C (strain RKS4594).